The primary structure comprises 2149 residues: MRVTSRVYLFGDQTGEFETGLRQLLQAKNNSLLTSFFERCFYALRQEVSKLPPSQRQIFPRFTSIVDLLARHREFGPNPALESALTCIYHFACFINHYGDGGHAYPSASESHIIGLCTGLLASAAVSSSRTVGELIPAAIETVTVSLRLGLCVLRTRDLIDRSYEKSQSWSMVVSGLNEEEVGALIHGFCQRKSISPSSRPYISAVNTHSLTISAPPTILQEFTNVCLSKENRPVRVPVHAPYHAPHLYDRRDVTSILESWPKGELANYTPRIPVLSSETGEIILARNLHELLGIALEEILLRKLCWDKVQDGYASMLKRTSSAACRIFPIASAASHGLSAALKRTGVPDVEVDNTISESAKTCDNENSTGRTEQSKIAIIGLSGRFPDAPSPEHFWDLLYKGLDVHRVVPPDRWDVKAHVDPTGKIRNTSKVPYGCWIEEPGLFDPRFFNMSPREALQADPAQRLALVTAYEALEQAGFVPDSTPSTQKDRVGIFYGMTSDDYREVNSGQDIDTYFIPGGNRAFTPGRINYHFKFSGPSVSVDTACSSSLAAIHLACNSLWRNDCDTAIAGGTNVLTNPDNFAGLDRGHFLSAKGNCNTFDDEADGYCRADAVGTVVLKRLEDAQADKDPILGVILGAYTNHSAEAVSMTRPHVGAQAFIFNKLLNEANVSPRDVGYIEMHGTGTQAGDAVEMKSVLDIFAPDYTRGPSQSLYLGSAKANIGHAESASGVSSLIKVLLMLKANTIPPHCGIKTKINHNFPTDFKERNVHIAFKPTSWERPQDGKRRLFVNNFSAAGGNTALLIEDAPLSTVSGAPDSRSTHIVAVSARSQSSLRNNIRSLMKYVSELDGQIGGENFLGKLSYTTTARRIHHQFRTMVSGSSLKGIQEALSSAASRDSFTPIPASTPSIGFVFTGQGAQYTGMGQQLYSSCSQFRDNIDRFDSIARSQGFPSIVPLIDGSVPVEEMSPVVTQLGTTCLQMAMTRYWMSLGVKPAFVLGHSLGNYAALNAAGVLTTSDTIYLSGRRAQLLQEKCQVGTHSMLAIKANLAQIKPFLDDDAYEVACINAPGETVISGLSANIDVLSEKLTAEGLKSTKLRVPYAFHSAQVEPILESLGEVAQGVTFHKPSIPVVSALLGEVINEDNWDALGPRYLQRHCRETVNLLAALEATRHAKLMNEKTIWIEVGSHPICSGMIKGTLGPQANTVASLRRNEDTWKVLCNSLSAIYLAGVDIQWKEYHGDFTSSHQVLQLPAYSWDNKNYYIPYNNNFCLTKGDPTVAKIEAAPTSQFHTTSVQRIVETRDEGSKAVVVMESDLSDPLLNPVIQGHKVNGAALCPSSLYADIAQTLGEYLIENYNPALRGSGLDVCDMTVPKPLIAKNSGPQLFRAMATADWEERKANIQIYSVKSDGKKIMDHASCLVKFSDTHLWEADWKRHSYLIKRSIERLQKSVEEGQSHRMHRGMFYKLFSALVDYGDNYKSVEEVVLDSEEYEATARVKFQAKSGNFHRNPFWIDSIGHLTGFVMNANDATDSQSQVYVNHGWDFMRCLKKFSPDTTYRTYVKMQPWQGTIYAGDVYAFDGDEIVAVYGGVKFQGVPRQVLNTVLPPAGGSKAAPRTTARAVPPPPINVEKPKSSVEAKAVSKAVPGDPVKSAGPSVLVQALKILAEEIGVSEAELSDDLVFADYGVDSLLSLTITGKFREELNMDLESSTFIDHPTVKDLKQLLSQASPSDSSDSSEESHYSFRDSSSTEPSTPGTPAFFSPKRGSVVTNVGESETIKTIRLTLSEEIGVSPDEITGDANLAEMGMDSLLSLTVLGRLRETLDIELPSDFFIENPTMDAVETALDLKPKAEPIPSELPVPIQTAAGDEINGVIKANSTHPPATSILLQGNPKKATKTLFLFPDGSGSATSYATLPAVSSDVCVYGLNCPYMKNPENLKCGLDELTMPYVAEIRRRQPKGPYSFGGWSAGGICAYDAARYLILEEGEKVERLLLLDSPFPIGLEKLPPRLYSFFNTIGLFGEGKTPPPKWLLPHFLAFIDSLDAYNAVPFPFSDPELGENMPKTYLIWAKDGVCGKPGDPRPDPPTDGSKDPREMLWLLNDRTDMGPNGWDTLVGPNNVAAIEAIEGADHFTMMKGDKAAKLSAFIGRAMAS.

Residues 8 to 244 (YLFGDQTGEF…VRVPVHAPYH (237 aa)) are N-terminal acylcarrier protein transacylase domain (SAT). In terms of domain architecture, Ketosynthase family 3 (KS3) spans 375 to 806 (QSKIAIIGLS…GGNTALLIED (432 aa)). Catalysis depends on for beta-ketoacyl synthase activity residues cysteine 547, histidine 682, and histidine 724. The interval 911–1231 (FVFTGQGAQY…LSAIYLAGVD (321 aa)) is malonyl-CoA:ACP transacylase (MAT) domain. Serine 1000 functions as the For acyl/malonyl transferase activity in the catalytic mechanism. A product template (PT) domain region spans residues 1290–1604 (TTSVQRIVET…RQVLNTVLPP (315 aa)). The interval 1294–1426 (QRIVETRDEG…CLVKFSDTHL (133 aa)) is N-terminal hotdog fold. The 306-residue stretch at 1294-1599 (QRIVETRDEG…FQGVPRQVLN (306 aa)) folds into the PKS/mFAS DH domain. The Proton acceptor; for dehydratase activity role is filled by histidine 1326. A C-terminal hotdog fold region spans residues 1454 to 1599 (SHRMHRGMFY…FQGVPRQVLN (146 aa)). Residue aspartate 1512 is the Proton donor; for dehydratase activity of the active site. Positions 1604–1631 (PAGGSKAAPRTTARAVPPPPINVEKPKS) are disordered. Residues 1649 to 1726 (SAGPSVLVQA…DLKQLLSQAS (78 aa)) form the Carrier 1 domain. Serine 1686 carries the post-translational modification O-(pantetheine 4'-phosphoryl)serine. Composition is skewed to low complexity over residues 1722-1731 (LSQASPSDSS) and 1744-1755 (SSSTEPSTPGTP). The disordered stretch occupies residues 1722 to 1763 (LSQASPSDSSDSSEESHYSFRDSSSTEPSTPGTPAFFSPKRG). A Carrier 2 domain is found at 1769 to 1846 (VGESETIKTI…AVETALDLKP (78 aa)). At serine 1806 the chain carries O-(pantetheine 4'-phosphoryl)serine. The segment at 1875 to 2147 (STHPPATSIL…KLSAFIGRAM (273 aa)) is thioesterase (TE) domain. Residue serine 1965 is the For thioesterase activity of the active site.

It catalyses the reaction 6 malonyl-CoA + acetyl-CoA + 6 H(+) = naphtopyrone YWA1 + 6 CO2 + 7 CoA + H2O. It participates in secondary metabolite biosynthesis. It functions in the pathway pigment biosynthesis. Functionally, non-reducing polyketide synthase; part of the gene cluster 24 that mediates the biosynthesis of a pigment with an aromatic structure protecting the pigmented fungus from both ionizing and non-ionizing radiations based on a mechanism similar to melanin, that is, free radical quenching and spherical spatial arrangement. Catalyzes the biosynthesis of the gamma-naphthopyrone precursor YWA1, via condensation of one acetyl-CoA starter unit with 6 malonyl-CoA units. YWA1 is probably further processed by the additional enzymes present within the cluster 24, however these additional steps have not been characterized yet. YWA1 is not converted to DHN-melanin in Byssochlamys spectabilis since the use of the DHN-melanin pathway inhibitor pyroquilon does not result in a loss of pigmentation. This is Non-reducing polyketide synthase PvBS090_009107 from Byssochlamys spectabilis (Paecilomyces variotii).